Here is a 104-residue protein sequence, read N- to C-terminus: Large ribosomal subunit protein uL24 (104 aa).

The protein belongs to the universal ribosomal protein uL24 family. As to quaternary structure, part of the 50S ribosomal subunit.

Its function is as follows. One of two assembly initiator proteins, it binds directly to the 5'-end of the 23S rRNA, where it nucleates assembly of the 50S subunit. Functionally, one of the proteins that surrounds the polypeptide exit tunnel on the outside of the subunit. The protein is Large ribosomal subunit protein uL24 of Idiomarina loihiensis (strain ATCC BAA-735 / DSM 15497 / L2-TR).